We begin with the raw amino-acid sequence, 138 residues long: Acidic phospholipase A2 5 (138 aa).

Positions 1 to 16 (MRTLWIVAVWLIGVEG) are cleaved as a signal peptide. 7 disulfides stabilise this stretch: cysteine 42–cysteine 131, cysteine 44–cysteine 60, cysteine 59–cysteine 111, cysteine 65–cysteine 138, cysteine 66–cysteine 104, cysteine 73–cysteine 97, and cysteine 91–cysteine 102. The Ca(2+) site is built by tyrosine 43, glycine 45, and glycine 47. Residue histidine 63 is part of the active site. Position 64 (aspartate 64) interacts with Ca(2+). Residue aspartate 105 is part of the active site.

It belongs to the phospholipase A2 family. Group II subfamily. D49 sub-subfamily. The cofactor is Ca(2+). In terms of tissue distribution, expressed by the venom gland.

It localises to the secreted. The catalysed reaction is a 1,2-diacyl-sn-glycero-3-phosphocholine + H2O = a 1-acyl-sn-glycero-3-phosphocholine + a fatty acid + H(+). In terms of biological role, PLA2 catalyzes the calcium-dependent hydrolysis of the 2-acyl groups in 3-sn-phosphoglycerides. This chain is Acidic phospholipase A2 5, found in Echis ocellatus (Ocellated saw-scaled viper).